The primary structure comprises 180 residues: Non-structural protein 4 (180 aa).

Helical transmembrane passes span 16-36 and 52-72; these read VCVH…VTVI and IVST…AILG.

It localises to the host membrane. This chain is Non-structural protein 4 (Segment-11), found in Banna virus (BAV).